Reading from the N-terminus, the 208-residue chain is Cytochrome c oxidase assembly protein CtaG (208 aa).

The Cytoplasmic segment spans residues methionine 1 to glycine 19. A helical; Signal-anchor for type II membrane protein transmembrane segment spans residues histidine 20–alanine 42. Residues valine 43 to leucine 208 lie on the Periplasmic side of the membrane.

The protein belongs to the COX11/CtaG family.

The protein resides in the cell inner membrane. Functionally, exerts its effect at some terminal stage of cytochrome c oxidase synthesis, probably by being involved in the insertion of the copper B into subunit I. This chain is Cytochrome c oxidase assembly protein CtaG, found in Rhodopseudomonas palustris (strain TIE-1).